The following is a 262-amino-acid chain: Serine/arginine-rich splicing factor 10 (262 aa).

In terms of domain architecture, RRM spans 10 to 88 (TSLFVRNVAD…RQIEIQFAQG (79 aa)). Phosphoserine occurs at positions 23, 106, and 108. Basic and acidic residues predominate over residues 116 to 126 (YRRSRSRSYER). The segment at 116–262 (YRRSRSRSYE…SWTSPKSSGH (147 aa)) is disordered. A phosphoserine mark is found at S129, S131, and S133. Residues 134-150 (FDYNYRRSYSPRNSRPT) are compositionally biased toward low complexity. Phosphoserine occurs at positions 158, 160, and 168. 2 stretches are compositionally biased toward basic residues: residues 165–186 (FKHRNRSFSRSKSNSRSRSKSQ) and 194–207 (KSRSRSASHTKTRG). Residues 209 to 234 (SKTDSKTHYKSGSRYEKESRKKEPPR) show a composition bias toward basic and acidic residues. The span at 252 to 262 (RSWTSPKSSGH) shows a compositional bias: low complexity.

Belongs to the splicing factor SR family. In terms of assembly, the phosphorylated but not the dephosphorylated form interacts with TRA2B/SFRS10. The dephosphorylated form interacts with SNRNP70. Isoform 1 interacts with FUS C-terminus. Isoform 3 interacts with FUS C-terminus. Interacts with YTHDC1, leading to inhibit RNA-binding activity of SRSF10. In terms of processing, phosphorylated. Fully dephosphorylated in mitosis and partially dephosphorylated on heat shock. Widely expressed.

The protein resides in the nucleus speckle. The protein localises to the cytoplasm. Functionally, splicing factor that in its dephosphorylated form acts as a general repressor of pre-mRNA splicing. Seems to interfere with the U1 snRNP 5'-splice recognition of SNRNP70. Required for splicing repression in M-phase cells and after heat shock. Also acts as a splicing factor that specifically promotes exon skipping during alternative splicing. Interaction with YTHDC1, a RNA-binding protein that recognizes and binds N6-methyladenosine (m6A)-containing RNAs, prevents SRSF10 from binding to its mRNA-binding sites close to m6A-containing regions, leading to inhibit exon skipping during alternative splicing. May be involved in regulation of alternative splicing in neurons, with isoform 1 acting as a positive and isoform 3 as a negative regulator. In Homo sapiens (Human), this protein is Serine/arginine-rich splicing factor 10 (SRSF10).